We begin with the raw amino-acid sequence, 271 residues long: MVLVEFLTGFSYLYGKKLFSVSKIMDMICLDYYTIIPAPLAMMLAARVKNYDLMKRLHEWDISIDYALLVVDDVPTIDYCLSLGARSPTRAQKRQLLGDNTFSPVYKYLMNCSGFPTKREKNIPSDVQCERLQKIIIKELIFNCSVLLEMVLLTEREYAYALHYAAKYNQMPILMYCWQQSTDSESVLLKTCCSDKNINCFNHCILYGGAQNFDAAMVEAAKHDARLLINYCVMLGGRSLNEARETAAAFGHLECAQHCLRLQSYIVDDTD.

Belongs to the asfivirus MGF 360 family.

In terms of biological role, plays a role in virus cell tropism, and may be required for efficient virus replication in macrophages. This African swine fever virus (isolate Tick/Malawi/Lil 20-1/1983) (ASFV) protein is Protein MGF 360-15R.